Here is a 100-residue protein sequence, read N- to C-terminus: Urease subunit gamma (100 aa).

Belongs to the urease gamma subunit family. As to quaternary structure, heterotrimer of UreA (gamma), UreB (beta) and UreC (alpha) subunits. Three heterotrimers associate to form the active enzyme.

It localises to the cytoplasm. The catalysed reaction is urea + 2 H2O + H(+) = hydrogencarbonate + 2 NH4(+). It participates in nitrogen metabolism; urea degradation; CO(2) and NH(3) from urea (urease route): step 1/1. In Burkholderia cenocepacia (strain ATCC BAA-245 / DSM 16553 / LMG 16656 / NCTC 13227 / J2315 / CF5610) (Burkholderia cepacia (strain J2315)), this protein is Urease subunit gamma.